A 515-amino-acid polypeptide reads, in one-letter code: 2-isopropylmalate synthase (515 aa).

The region spanning 4-266 (IKFFDTTLRD…ETRLNLQEIK (263 aa)) is the Pyruvate carboxyltransferase domain. 4 residues coordinate Mn(2+): D13, H201, H203, and N237. Residues 391-515 (QLSSIQVQYG…RAENEKVTTP (125 aa)) are regulatory domain.

It belongs to the alpha-IPM synthase/homocitrate synthase family. LeuA type 1 subfamily. In terms of assembly, homodimer. Requires Mn(2+) as cofactor.

Its subcellular location is the cytoplasm. The enzyme catalyses 3-methyl-2-oxobutanoate + acetyl-CoA + H2O = (2S)-2-isopropylmalate + CoA + H(+). Its pathway is amino-acid biosynthesis; L-leucine biosynthesis; L-leucine from 3-methyl-2-oxobutanoate: step 1/4. In terms of biological role, catalyzes the condensation of the acetyl group of acetyl-CoA with 3-methyl-2-oxobutanoate (2-ketoisovalerate) to form 3-carboxy-3-hydroxy-4-methylpentanoate (2-isopropylmalate). The sequence is that of 2-isopropylmalate synthase from Geobacillus thermodenitrificans (strain NG80-2).